The chain runs to 227 residues: Cytochrome c oxidase subunit 2 (227 aa).

Residues 1–14 (MAYPFQLGLQDATS) lie on the Mitochondrial intermembrane side of the membrane. A helical transmembrane segment spans residues 15-45 (PIMEELTSFHDHTLMIVFLISSLVLYIILLM). Topologically, residues 46–59 (LTTKLTHTSTMDAQ) are mitochondrial matrix. The helical transmembrane segment at 60-87 (EVETIWTILPAVILILIALPSLRILYMM) threads the bilayer. The Mitochondrial intermembrane portion of the chain corresponds to 88–227 (DEINNPALTV…HFENWSASMI (140 aa)). Residues His161, Cys196, Glu198, Cys200, His204, and Met207 each coordinate Cu cation. Mg(2+) is bound at residue Glu198.

The protein belongs to the cytochrome c oxidase subunit 2 family. In terms of assembly, component of the cytochrome c oxidase (complex IV, CIV), a multisubunit enzyme composed of 14 subunits. The complex is composed of a catalytic core of 3 subunits MT-CO1, MT-CO2 and MT-CO3, encoded in the mitochondrial DNA, and 11 supernumerary subunits COX4I, COX5A, COX5B, COX6A, COX6B, COX6C, COX7A, COX7B, COX7C, COX8 and NDUFA4, which are encoded in the nuclear genome. The complex exists as a monomer or a dimer and forms supercomplexes (SCs) in the inner mitochondrial membrane with NADH-ubiquinone oxidoreductase (complex I, CI) and ubiquinol-cytochrome c oxidoreductase (cytochrome b-c1 complex, complex III, CIII), resulting in different assemblies (supercomplex SCI(1)III(2)IV(1) and megacomplex MCI(2)III(2)IV(2)). Found in a complex with TMEM177, COA6, COX18, COX20, SCO1 and SCO2. Interacts with TMEM177 in a COX20-dependent manner. Interacts with COX20. Interacts with COX16. Cu cation serves as cofactor.

The protein resides in the mitochondrion inner membrane. The enzyme catalyses 4 Fe(II)-[cytochrome c] + O2 + 8 H(+)(in) = 4 Fe(III)-[cytochrome c] + 2 H2O + 4 H(+)(out). Its function is as follows. Component of the cytochrome c oxidase, the last enzyme in the mitochondrial electron transport chain which drives oxidative phosphorylation. The respiratory chain contains 3 multisubunit complexes succinate dehydrogenase (complex II, CII), ubiquinol-cytochrome c oxidoreductase (cytochrome b-c1 complex, complex III, CIII) and cytochrome c oxidase (complex IV, CIV), that cooperate to transfer electrons derived from NADH and succinate to molecular oxygen, creating an electrochemical gradient over the inner membrane that drives transmembrane transport and the ATP synthase. Cytochrome c oxidase is the component of the respiratory chain that catalyzes the reduction of oxygen to water. Electrons originating from reduced cytochrome c in the intermembrane space (IMS) are transferred via the dinuclear copper A center (CU(A)) of subunit 2 and heme A of subunit 1 to the active site in subunit 1, a binuclear center (BNC) formed by heme A3 and copper B (CU(B)). The BNC reduces molecular oxygen to 2 water molecules using 4 electrons from cytochrome c in the IMS and 4 protons from the mitochondrial matrix. The polypeptide is Cytochrome c oxidase subunit 2 (MT-CO2) (Anisomys imitator (Uneven-toothed rat)).